Consider the following 114-residue polypeptide: Large ribosomal subunit protein bL20c (114 aa).

Belongs to the bacterial ribosomal protein bL20 family.

It localises to the plastid. It is found in the chloroplast. Its function is as follows. Binds directly to 23S ribosomal RNA and is necessary for the in vitro assembly process of the 50S ribosomal subunit. It is not involved in the protein synthesizing functions of that subunit. The polypeptide is Large ribosomal subunit protein bL20c (rpl20) (Trieres chinensis (Marine centric diatom)).